The primary structure comprises 199 residues: Recombination protein RecR (199 aa).

Residues 57–72 form a C4-type zinc finger; the sequence is CSQCHNITDTDPCQIC. Residues 80 to 176 enclose the Toprim domain; that stretch reads TTICVVQESR…KVTRLAHGLP (97 aa).

This sequence belongs to the RecR family.

May play a role in DNA repair. It seems to be involved in an RecBC-independent recombinational process of DNA repair. It may act with RecF and RecO. The polypeptide is Recombination protein RecR (Shouchella clausii (strain KSM-K16) (Alkalihalobacillus clausii)).